Here is a 605-residue protein sequence, read N- to C-terminus: Elongation factor 4 (605 aa).

A tr-type G domain is found at 11–193 (KRIRNFSIIA…RIVTQISPPK (183 aa)). Residues 23-28 (DHGKST) and 140-143 (NKVD) each bind GTP.

The protein belongs to the TRAFAC class translation factor GTPase superfamily. Classic translation factor GTPase family. LepA subfamily.

The protein localises to the cell membrane. It catalyses the reaction GTP + H2O = GDP + phosphate + H(+). Required for accurate and efficient protein synthesis under certain stress conditions. May act as a fidelity factor of the translation reaction, by catalyzing a one-codon backward translocation of tRNAs on improperly translocated ribosomes. Back-translocation proceeds from a post-translocation (POST) complex to a pre-translocation (PRE) complex, thus giving elongation factor G a second chance to translocate the tRNAs correctly. Binds to ribosomes in a GTP-dependent manner. This is Elongation factor 4 from Phytoplasma australiense.